The primary structure comprises 110 residues: Large ribosomal subunit protein uL22 (110 aa).

The protein belongs to the universal ribosomal protein uL22 family. In terms of assembly, part of the 50S ribosomal subunit.

This protein binds specifically to 23S rRNA; its binding is stimulated by other ribosomal proteins, e.g. L4, L17, and L20. It is important during the early stages of 50S assembly. It makes multiple contacts with different domains of the 23S rRNA in the assembled 50S subunit and ribosome. In terms of biological role, the globular domain of the protein is located near the polypeptide exit tunnel on the outside of the subunit, while an extended beta-hairpin is found that lines the wall of the exit tunnel in the center of the 70S ribosome. The protein is Large ribosomal subunit protein uL22 of Oleidesulfovibrio alaskensis (strain ATCC BAA-1058 / DSM 17464 / G20) (Desulfovibrio alaskensis).